The following is a 264-amino-acid chain: Thymidylate synthase (264 aa).

DUMP is bound at residue arginine 21. Histidine 51 contacts (6R)-5,10-methylene-5,6,7,8-tetrahydrofolate. 126 to 127 (RR) lines the dUMP pocket. Catalysis depends on cysteine 146, which acts as the Nucleophile. DUMP is bound by residues 166 to 169 (RSAD), asparagine 177, and 207 to 209 (HLY). Aspartate 169 serves as a coordination point for (6R)-5,10-methylene-5,6,7,8-tetrahydrofolate. Alanine 263 serves as a coordination point for (6R)-5,10-methylene-5,6,7,8-tetrahydrofolate.

The protein belongs to the thymidylate synthase family. Bacterial-type ThyA subfamily. As to quaternary structure, homodimer.

The protein resides in the cytoplasm. The enzyme catalyses dUMP + (6R)-5,10-methylene-5,6,7,8-tetrahydrofolate = 7,8-dihydrofolate + dTMP. It functions in the pathway pyrimidine metabolism; dTTP biosynthesis. Functionally, catalyzes the reductive methylation of 2'-deoxyuridine-5'-monophosphate (dUMP) to 2'-deoxythymidine-5'-monophosphate (dTMP) while utilizing 5,10-methylenetetrahydrofolate (mTHF) as the methyl donor and reductant in the reaction, yielding dihydrofolate (DHF) as a by-product. This enzymatic reaction provides an intracellular de novo source of dTMP, an essential precursor for DNA biosynthesis. The protein is Thymidylate synthase of Bartonella quintana (strain Toulouse) (Rochalimaea quintana).